A 357-amino-acid polypeptide reads, in one-letter code: Red-sensitive opsin (357 aa).

Residues Met1–Val49 lie on the Extracellular side of the membrane. Residue Asn31 is glycosylated (N-linked (GlcNAc...) asparagine). Residues Tyr50 to Ala74 form a helical membrane-spanning segment. At Thr75–Asn86 the chain is on the cytoplasmic side. A helical transmembrane segment spans residues Trp87–Phe112. At Phe113–Glu126 the chain is on the extracellular side. Cys123 and Cys200 are oxidised to a cystine. The chain crosses the membrane as a helical span at residues Gly127–Trp146. The Cytoplasmic segment spans residues Glu147–Trp165. The helical transmembrane segment at Ala166–Ser189 threads the bilayer. The Extracellular portion of the chain corresponds to Arg190–Ser215. The chain crosses the membrane as a helical span at residues Tyr216–Ile243. Residues Arg244–Arg265 are Cytoplasmic-facing. The chain crosses the membrane as a helical span at residues Met266–Ala289. Over Ala290–His297 the chain is Extracellular. Residues Pro298 to Met322 traverse the membrane as a helical segment. Lys309 is modified (N6-(retinylidene)lysine). Residues Asn323–Ala357 lie on the Cytoplasmic side of the membrane.

This sequence belongs to the G-protein coupled receptor 1 family. Opsin subfamily. Post-translationally, phosphorylated on some or all of the serine and threonine residues present in the C-terminal region. As to expression, the color pigments are found in the cone photoreceptor cells.

The protein resides in the membrane. Its function is as follows. Visual pigments are the light-absorbing molecules that mediate vision. They consist of an apoprotein, opsin, covalently linked to cis-retinal. The chain is Red-sensitive opsin from Oryzias latipes (Japanese rice fish).